The primary structure comprises 154 residues: Large ribosomal subunit protein uL13 (154 aa).

The protein belongs to the universal ribosomal protein uL13 family. In terms of assembly, part of the 50S ribosomal subunit.

In terms of biological role, this protein is one of the early assembly proteins of the 50S ribosomal subunit, although it is not seen to bind rRNA by itself. It is important during the early stages of 50S assembly. This is Large ribosomal subunit protein uL13 from Bartonella quintana (strain Toulouse) (Rochalimaea quintana).